The primary structure comprises 342 residues: GTPase Obg (342 aa).

The Obg domain maps to 1–159 (MKFIDEAKIY…RWIRLELKLL (159 aa)). The 173-residue stretch at 160–332 (ADVGIIGLPN…LLYKIGEALK (173 aa)) folds into the OBG-type G domain. GTP-binding positions include 166-173 (GLPNVGKS), 191-195 (FTTLT), 214-217 (DIPG), 284-287 (NKTD), and 313-315 (SAA). Residues S173 and T193 each coordinate Mg(2+).

The protein belongs to the TRAFAC class OBG-HflX-like GTPase superfamily. OBG GTPase family. Monomer. It depends on Mg(2+) as a cofactor.

Its subcellular location is the cytoplasm. In terms of biological role, an essential GTPase which binds GTP, GDP and possibly (p)ppGpp with moderate affinity, with high nucleotide exchange rates and a fairly low GTP hydrolysis rate. Plays a role in control of the cell cycle, stress response, ribosome biogenesis and in those bacteria that undergo differentiation, in morphogenesis control. The sequence is that of GTPase Obg from Syntrophus aciditrophicus (strain SB).